Consider the following 427-residue polypeptide: Enolase (427 aa).

Q163 provides a ligand contact to (2R)-2-phosphoglycerate. E205 (proton donor) is an active-site residue. 3 residues coordinate Mg(2+): D242, E285, and D312. K337, R366, S367, and K388 together coordinate (2R)-2-phosphoglycerate. K337 functions as the Proton acceptor in the catalytic mechanism.

The protein belongs to the enolase family. Mg(2+) serves as cofactor.

The protein localises to the cytoplasm. Its subcellular location is the secreted. The protein resides in the cell surface. The catalysed reaction is (2R)-2-phosphoglycerate = phosphoenolpyruvate + H2O. Its pathway is carbohydrate degradation; glycolysis; pyruvate from D-glyceraldehyde 3-phosphate: step 4/5. Its function is as follows. Catalyzes the reversible conversion of 2-phosphoglycerate (2-PG) into phosphoenolpyruvate (PEP). It is essential for the degradation of carbohydrates via glycolysis. This Nitrobacter hamburgensis (strain DSM 10229 / NCIMB 13809 / X14) protein is Enolase.